The following is a 412-amino-acid chain: Putative competence-damage inducible protein (412 aa).

The protein belongs to the CinA family.

This Bacillus cereus (strain ATCC 14579 / DSM 31 / CCUG 7414 / JCM 2152 / NBRC 15305 / NCIMB 9373 / NCTC 2599 / NRRL B-3711) protein is Putative competence-damage inducible protein.